The chain runs to 108 residues: Cuticle protein AM1199 (108 aa).

Residue glutamine 1 is modified to Pyrrolidone carboxylic acid. The Chitin-binding type R&amp;R domain maps to 26–91; that stretch reads DGNFGYDFET…AESPLIPTPH (66 aa). Residue threonine 89 is glycosylated (O-linked (HexNAc) threonine).

Arthrodial membrane.

This Cancer pagurus (Rock crab) protein is Cuticle protein AM1199.